Consider the following 96-residue polypeptide: Large ribosomal subunit protein uL23 (96 aa).

It belongs to the universal ribosomal protein uL23 family. Part of the 50S ribosomal subunit. Contacts protein L29, and trigger factor when it is bound to the ribosome.

Its function is as follows. One of the early assembly proteins it binds 23S rRNA. One of the proteins that surrounds the polypeptide exit tunnel on the outside of the ribosome. Forms the main docking site for trigger factor binding to the ribosome. The protein is Large ribosomal subunit protein uL23 of Thermus thermophilus (strain ATCC BAA-163 / DSM 7039 / HB27).